A 303-amino-acid polypeptide reads, in one-letter code: Polyisoprenyl-teichoic acid--peptidoglycan teichoic acid transferase TagU (303 aa).

Residues Met-1 to Lys-6 are Cytoplasmic-facing. The chain crosses the membrane as a helical; Signal-anchor for type II membrane protein span at residues Ile-7–Ala-27. The Extracellular segment spans residues Lys-28–Lys-303.

It belongs to the LytR/CpsA/Psr (LCP) family.

It localises to the cell membrane. The protein operates within cell wall biogenesis. Its function is as follows. May catalyze the final step in cell wall teichoic acid biosynthesis, the transfer of the anionic cell wall polymers (APs) from their lipid-linked precursor to the cell wall peptidoglycan (PG). The polypeptide is Polyisoprenyl-teichoic acid--peptidoglycan teichoic acid transferase TagU (Enterococcus faecalis (strain ATCC 700802 / V583)).